The chain runs to 338 residues: tRNA N6-adenosine threonylcarbamoyltransferase (338 aa).

Fe cation is bound by residues H111 and H115. Substrate is bound by residues 134–138 (LVSGG), D167, G180, and N272. D300 contributes to the Fe cation binding site.

This sequence belongs to the KAE1 / TsaD family. Requires Fe(2+) as cofactor.

Its subcellular location is the cytoplasm. The enzyme catalyses L-threonylcarbamoyladenylate + adenosine(37) in tRNA = N(6)-L-threonylcarbamoyladenosine(37) in tRNA + AMP + H(+). Its function is as follows. Required for the formation of a threonylcarbamoyl group on adenosine at position 37 (t(6)A37) in tRNAs that read codons beginning with adenine. Is involved in the transfer of the threonylcarbamoyl moiety of threonylcarbamoyl-AMP (TC-AMP) to the N6 group of A37, together with TsaE and TsaB. TsaD likely plays a direct catalytic role in this reaction. In Shewanella halifaxensis (strain HAW-EB4), this protein is tRNA N6-adenosine threonylcarbamoyltransferase.